The chain runs to 182 residues: NADH-quinone oxidoreductase subunit I (182 aa).

4Fe-4S ferredoxin-type domains are found at residues 52–82 (LTRD…LQKA) and 92–121 (DFFR…LTPD). [4Fe-4S] cluster is bound by residues C62, C65, C68, C72, C101, C104, C107, and C111.

It belongs to the complex I 23 kDa subunit family. NDH-1 is composed of 13 different subunits. Subunits NuoA, H, J, K, L, M, N constitute the membrane sector of the complex. It depends on [4Fe-4S] cluster as a cofactor.

The protein resides in the cell inner membrane. It carries out the reaction a quinone + NADH + 5 H(+)(in) = a quinol + NAD(+) + 4 H(+)(out). Functionally, NDH-1 shuttles electrons from NADH, via FMN and iron-sulfur (Fe-S) centers, to quinones in the respiratory chain. The immediate electron acceptor for the enzyme in this species is believed to be ubiquinone. Couples the redox reaction to proton translocation (for every two electrons transferred, four hydrogen ions are translocated across the cytoplasmic membrane), and thus conserves the redox energy in a proton gradient. The sequence is that of NADH-quinone oxidoreductase subunit I from Pseudomonas syringae pv. syringae (strain B728a).